We begin with the raw amino-acid sequence, 377 residues long: Chaperone protein DnaJ (377 aa).

Residues 5–70 enclose the J domain; it reads DCYEVLGISR…QKKAAYDQYG (66 aa). A CR-type zinc finger spans residues 133 to 211; the sequence is GISKEIQIPT…CHGHGRYERS (79 aa). Residues Cys-146, Cys-149, Cys-163, Cys-166, Cys-185, Cys-188, Cys-199, and Cys-202 each contribute to the Zn(2+) site. CXXCXGXG motif repeat units lie at residues 146-153, 163-170, 185-192, and 199-206; these read CEQCNGSG, CGTCYGQG, CPTCRGQG, and CHKCHGHG.

Belongs to the DnaJ family. As to quaternary structure, homodimer. It depends on Zn(2+) as a cofactor.

Its subcellular location is the cytoplasm. Participates actively in the response to hyperosmotic and heat shock by preventing the aggregation of stress-denatured proteins and by disaggregating proteins, also in an autonomous, DnaK-independent fashion. Unfolded proteins bind initially to DnaJ; upon interaction with the DnaJ-bound protein, DnaK hydrolyzes its bound ATP, resulting in the formation of a stable complex. GrpE releases ADP from DnaK; ATP binding to DnaK triggers the release of the substrate protein, thus completing the reaction cycle. Several rounds of ATP-dependent interactions between DnaJ, DnaK and GrpE are required for fully efficient folding. Also involved, together with DnaK and GrpE, in the DNA replication of plasmids through activation of initiation proteins. The chain is Chaperone protein DnaJ from Psychromonas ingrahamii (strain DSM 17664 / CCUG 51855 / 37).